The primary structure comprises 196 residues: UPF0319 protein VV1_0237 (196 aa).

An N-terminal signal peptide occupies residues 1–19; it reads MKKMMILSALALFSSSLFA.

It belongs to the UPF0319 family.

In Vibrio vulnificus (strain CMCP6), this protein is UPF0319 protein VV1_0237.